Here is a 684-residue protein sequence, read N- to C-terminus: Agnestins biosynthesis cluster transcription factor AgnL11 (684 aa).

The segment at residues 25 to 51 (CHFCRTKKLKCDRRFPCSNCRARRLSC) is a DNA-binding region (zn(2)-C6 fungal-type). A coiled-coil region spans residues 76–103 (NEELSENINELKARLQRLEELISVNAEE). Residues 601–644 (KGSASARKDKNPIHGDTDRATPPGSSNLPQHDKSSSSSPAPPVW) are disordered. Residues 606–619 (ARKDKNPIHGDTDR) are compositionally biased toward basic and acidic residues.

Its subcellular location is the nucleus. Transcription factor that regulates the expression of the gene cluster that mediates the biosynthesis of agnestins, dihydroxy-xanthone metabolites. This chain is Agnestins biosynthesis cluster transcription factor AgnL11, found in Paecilomyces divaricatus (Penicillium divaricatum).